The chain runs to 375 residues: Growth/differentiation factor 8 (375 aa).

The first 18 residues, 1–18 (MQKLQISVYIYLFMLIVA), serve as a signal peptide directing secretion. A propeptide spanning residues 19–266 (GPVDLNENSE…VTDTPKRSRR (248 aa)) is cleaved from the precursor. Asparagine 47 and asparagine 71 each carry an N-linked (GlcNAc...) asparagine glycan. Cystine bridges form between cysteine 272/cysteine 282, cysteine 281/cysteine 340, cysteine 309/cysteine 372, and cysteine 313/cysteine 374.

Belongs to the TGF-beta family. Homodimer; disulfide-linked. Interacts with WFIKKN2, leading to inhibit its activity. Interacts with FSTL3. In terms of processing, synthesized as large precursor molecule that undergoes proteolytic cleavage to generate an N-terminal propeptide and a disulfide linked C-terminal dimer, which is the biologically active molecule. The circulating form consists of a latent complex of the C-terminal dimer and other proteins, including its propeptide, which maintain the C-terminal dimer in a latent, inactive state. Ligand activation requires additional cleavage of the prodomain by a tolloid-like metalloproteinase.

The protein resides in the secreted. Its function is as follows. Acts specifically as a negative regulator of skeletal muscle growth. The protein is Growth/differentiation factor 8 (MSTN) of Bos gaurus (Seladang).